The primary structure comprises 285 residues: Nucleotide-binding protein Psyr_4150 (285 aa).

8–15 (GRSGSGKS) serves as a coordination point for ATP. 60–63 (DARN) is a GTP binding site.

The protein belongs to the RapZ-like family.

In terms of biological role, displays ATPase and GTPase activities. The polypeptide is Nucleotide-binding protein Psyr_4150 (Pseudomonas syringae pv. syringae (strain B728a)).